We begin with the raw amino-acid sequence, 820 residues long: Protein O-mannosyl-transferase 2 (820 aa).

Residues 124-144 (AAGWWATLAVVTLLSFATRFH) traverse the membrane as a helical segment. Residue Asn168 is glycosylated (N-linked (GlcNAc...) asparagine). 5 helical membrane passes run 170–190 (TFFFDVHPPLGKMLIGLAGYL), 216–236 (GFCAFLGSWLIPFAYLTVLDL), 261–281 (QYILLDPILMFFIMAAMLSMV), 301–321 (LTGISLAGALGVKFVGLFIIV), and 353–373 (ILCLIVLPLVLYVTIFAVHVM). N-linked (GlcNAc...) asparagine glycans are attached at residues Asn376 and Asn400. MIR domains follow at residues 404 to 460 (PEHL…IKKY), 473 to 529 (VEFV…IEVV), and 534 to 591 (GNRI…IEEH). Asn515 is a glycosylation site (N-linked (GlcNAc...) asparagine). 2 N-linked (GlcNAc...) asparagine glycosylation sites follow: Asn598 and Asn653. The next 4 membrane-spanning stretches (helical) occupy residues 659 to 679 (VYLLGNPVVWWLNLVSIVLYL), 713 to 733 (LLLGWMLHYFPFFLMGRILYF), 735 to 755 (HYFPAMLFSSMLTGILWDTLL), and 774 to 794 (VGILSLLLTTAYSFYLFHPLA).

The protein belongs to the glycosyltransferase 39 family. Post-translationally, N-glycosylated. In terms of tissue distribution, ubiquitous. Highly expressed in the acrosome of cap phase spermatids, in spermatocytes and liver. Isoform 1 seems to be testis-specific.

It localises to the endoplasmic reticulum membrane. The catalysed reaction is a di-trans,poly-cis-dolichyl beta-D-mannosyl phosphate + L-seryl-[protein] = 3-O-(alpha-D-mannosyl)-L-seryl-[protein] + a di-trans,poly-cis-dolichyl phosphate + H(+). It catalyses the reaction a di-trans,poly-cis-dolichyl beta-D-mannosyl phosphate + L-threonyl-[protein] = 3-O-(alpha-D-mannosyl)-L-threonyl-[protein] + a di-trans,poly-cis-dolichyl phosphate + H(+). It functions in the pathway protein modification; protein glycosylation. In terms of biological role, transfers mannosyl residues to the hydroxyl group of serine or threonine residues. Coexpression of both POMT1 and POMT2 is necessary for enzyme activity, expression of either POMT1 or POMT2 alone is insufficient. Essentially dedicated to O-mannosylation of alpha-DAG1 and few other proteins but not of cadherins and protocaherins. The protein is Protein O-mannosyl-transferase 2 (Pomt2) of Mus musculus (Mouse).